The following is a 394-amino-acid chain: Elongation factor Tu (394 aa).

The region spanning 10 to 204 is the tr-type G domain; sequence KPHVNVGTIG…AMDDYIPAPE (195 aa). The interval 19 to 26 is G1; sequence GHVDHGKT. 19–26 lines the GTP pocket; the sequence is GHVDHGKT. Position 26 (T26) interacts with Mg(2+). Residues 60–64 form a G2 region; that stretch reads GITIN. The tract at residues 81 to 84 is G3; it reads DCPG. GTP is bound by residues 81–85 and 136–139; these read DCPGH and NKCD. The G4 stretch occupies residues 136–139; that stretch reads NKCD. A G5 region spans residues 174–176; the sequence is SAL.

The protein belongs to the TRAFAC class translation factor GTPase superfamily. Classic translation factor GTPase family. EF-Tu/EF-1A subfamily. Monomer.

It localises to the cytoplasm. It catalyses the reaction GTP + H2O = GDP + phosphate + H(+). GTP hydrolase that promotes the GTP-dependent binding of aminoacyl-tRNA to the A-site of ribosomes during protein biosynthesis. This chain is Elongation factor Tu, found in Francisella tularensis subsp. tularensis (strain FSC 198).